The sequence spans 96 residues: Toxin ParE1 (96 aa).

The protein belongs to the RelE toxin family. As to quaternary structure, forms a ParD1(2)-ParE1(2) heterotetramer.

In terms of biological role, toxic component of a type II toxin-antitoxin (TA) system. Its toxic effect is neutralized by coexpression with cognate antitoxin ParD1 but no other ParD or RelB antitoxin. Low levels of wild-type toxin in the absence of antitoxin decreases the rate of cell growth, and results in death or loss of colony formation abilities and greatly elongated cells. Low levels of a mutant missing the last 4 residues leads to loss of cell division while cell elongation continues. This chain is Toxin ParE1 (parE1), found in Caulobacter vibrioides (strain ATCC 19089 / CIP 103742 / CB 15) (Caulobacter crescentus).